The following is a 269-amino-acid chain: Dermonecrotic toxin SpeSicTox-betaIB3 (269 aa).

The active site involves H5. The Mg(2+) site is built by E25 and D27. The Nucleophile role is filled by H41. 2 disulfides stabilise this stretch: C45-C51 and C47-C191. Mg(2+) is bound at residue D85.

Belongs to the arthropod phospholipase D family. Class II subfamily. Requires Mg(2+) as cofactor. As to expression, expressed by the venom gland.

It localises to the secreted. The catalysed reaction is an N-(acyl)-sphingosylphosphocholine = an N-(acyl)-sphingosyl-1,3-cyclic phosphate + choline. It carries out the reaction an N-(acyl)-sphingosylphosphoethanolamine = an N-(acyl)-sphingosyl-1,3-cyclic phosphate + ethanolamine. The enzyme catalyses a 1-acyl-sn-glycero-3-phosphocholine = a 1-acyl-sn-glycero-2,3-cyclic phosphate + choline. It catalyses the reaction a 1-acyl-sn-glycero-3-phosphoethanolamine = a 1-acyl-sn-glycero-2,3-cyclic phosphate + ethanolamine. Its function is as follows. Dermonecrotic toxins cleave the phosphodiester linkage between the phosphate and headgroup of certain phospholipids (sphingolipid and lysolipid substrates), forming an alcohol (often choline) and a cyclic phosphate. This toxin acts on sphingomyelin (SM). It may also act on ceramide phosphoethanolamine (CPE), lysophosphatidylcholine (LPC) and lysophosphatidylethanolamine (LPE), but not on lysophosphatidylserine (LPS), and lysophosphatidylglycerol (LPG). It acts by transphosphatidylation, releasing exclusively cyclic phosphate products as second products. Induces dermonecrosis, hemolysis, increased vascular permeability, edema, inflammatory response, and platelet aggregation. This Sicarius peruensis (Six-eyed sand spider) protein is Dermonecrotic toxin SpeSicTox-betaIB3.